A 1401-amino-acid polypeptide reads, in one-letter code: DNA-directed RNA polymerase subunit beta' (1401 aa).

Residues Cys70, Cys72, Cys85, and Cys88 each coordinate Zn(2+). Asp460, Asp462, and Asp464 together coordinate Mg(2+). Zn(2+)-binding residues include Cys808, Cys882, Cys889, and Cys892.

Belongs to the RNA polymerase beta' chain family. As to quaternary structure, the RNAP catalytic core consists of 2 alpha, 1 beta, 1 beta' and 1 omega subunit. When a sigma factor is associated with the core the holoenzyme is formed, which can initiate transcription. Mg(2+) serves as cofactor. The cofactor is Zn(2+).

The catalysed reaction is RNA(n) + a ribonucleoside 5'-triphosphate = RNA(n+1) + diphosphate. DNA-dependent RNA polymerase catalyzes the transcription of DNA into RNA using the four ribonucleoside triphosphates as substrates. The chain is DNA-directed RNA polymerase subunit beta' from Legionella pneumophila (strain Paris).